We begin with the raw amino-acid sequence, 284 residues long: 4-diphosphocytidyl-2-C-methyl-D-erythritol kinase (284 aa).

Lysine 14 is a catalytic residue. 98 to 108 (PMGGGLGGGSS) lines the ATP pocket. The active site involves aspartate 140.

The protein belongs to the GHMP kinase family. IspE subfamily.

The enzyme catalyses 4-CDP-2-C-methyl-D-erythritol + ATP = 4-CDP-2-C-methyl-D-erythritol 2-phosphate + ADP + H(+). The protein operates within isoprenoid biosynthesis; isopentenyl diphosphate biosynthesis via DXP pathway; isopentenyl diphosphate from 1-deoxy-D-xylulose 5-phosphate: step 3/6. Catalyzes the phosphorylation of the position 2 hydroxy group of 4-diphosphocytidyl-2C-methyl-D-erythritol. This chain is 4-diphosphocytidyl-2-C-methyl-D-erythritol kinase, found in Shewanella sp. (strain MR-4).